We begin with the raw amino-acid sequence, 143 residues long: Large ribosomal subunit protein uL15 (143 aa).

2 stretches are compositionally biased toward basic residues: residues 1–14 (MIRK…KRGS) and 23–38 (KKHR…GNAG). The segment at 1-38 (MIRKSKKITKKRGSRTCGYGEAKKHRGAGHRGGRGNAG) is disordered.

Belongs to the universal ribosomal protein uL15 family. As to quaternary structure, part of the 50S ribosomal subunit.

Functionally, binds to the 23S rRNA. This chain is Large ribosomal subunit protein uL15, found in Methanococcus maripaludis (strain DSM 14266 / JCM 13030 / NBRC 101832 / S2 / LL).